The following is a 974-amino-acid chain: Coiled-coil domain-containing protein 146 (974 aa).

The interval 1–44 (MEDRSKYIAEESEDEEDEEQEEKEKKGGASTSTETEEDQEDIPS) is disordered. Acidic residues predominate over residues 10–21 (EESEDEEDEEQE). Phosphoserine is present on Ser12. Coiled-coil stretches lie at residues 105 to 160 (VQLL…QERE), 195 to 340 (KLLK…TKEN), 421 to 474 (LPEQ…REVL), 512 to 660 (KKLE…NESG), 687 to 712 (QDIE…QRQI), and 767 to 848 (LTEE…ELSM).

Interacts with CCDC38 and CCDC42. Interacts with intraflagellar transport proteins IFT20 and IFT88.

Its subcellular location is the cytoplasm. It is found in the cytoskeleton. The protein resides in the microtubule organizing center. It localises to the centrosome. The protein localises to the centriole. Its subcellular location is the cell projection. It is found in the cilium. The protein resides in the flagellum. It localises to the flagellum axoneme. The protein localises to the cilium basal body. Its subcellular location is the midbody. Its function is as follows. Essential for sperm flagellum biogenesis and male fertility. This chain is Coiled-coil domain-containing protein 146 (Ccdc146), found in Rattus norvegicus (Rat).